A 374-amino-acid chain; its full sequence is Alanine racemase (374 aa).

The active-site Proton acceptor; specific for D-alanine is the lysine 40. An N6-(pyridoxal phosphate)lysine modification is found at lysine 40. Arginine 139 is a substrate binding site. The Proton acceptor; specific for L-alanine role is filled by tyrosine 261. Residue methionine 309 participates in substrate binding.

This sequence belongs to the alanine racemase family. It depends on pyridoxal 5'-phosphate as a cofactor.

It carries out the reaction L-alanine = D-alanine. It functions in the pathway amino-acid biosynthesis; D-alanine biosynthesis; D-alanine from L-alanine: step 1/1. Catalyzes the interconversion of L-alanine and D-alanine. May also act on other amino acids. The sequence is that of Alanine racemase (alr) from Rhodospirillum rubrum (strain ATCC 11170 / ATH 1.1.1 / DSM 467 / LMG 4362 / NCIMB 8255 / S1).